A 546-amino-acid chain; its full sequence is Chaperonin GroEL 2 (546 aa).

Residues 30-33 (TLGP), Lys-51, 87-91 (DGTTT), Gly-415, and Asp-496 contribute to the ATP site.

This sequence belongs to the chaperonin (HSP60) family. Forms a cylinder of 14 subunits composed of two heptameric rings stacked back-to-back. Interacts with the co-chaperonin GroES.

It localises to the cytoplasm. It catalyses the reaction ATP + H2O + a folded polypeptide = ADP + phosphate + an unfolded polypeptide.. Together with its co-chaperonin GroES, plays an essential role in assisting protein folding. The GroEL-GroES system forms a nano-cage that allows encapsulation of the non-native substrate proteins and provides a physical environment optimized to promote and accelerate protein folding. The sequence is that of Chaperonin GroEL 2 from Bradyrhizobium sp. (strain ORS 278).